An 869-amino-acid chain; its full sequence is Ribonucleoside-diphosphate reductase large chain 2 (869 aa).

In terms of domain architecture, ATP-cone spans M1–K92. Residues K5–R6, E11–K17, T53, and D57 each bind ATP. Residues S202 and S217 each coordinate GDP. A disulfide bridge connects residues C218 and C443. DTTP contacts are provided by residues D226 to I228, K243, R256, and A263 to G264. Position 227 is a phosphoserine (S227). Residue K387 forms a Glycyl lysine isopeptide (Lys-Gly) (interchain with G-Cter in ubiquitin) linkage. N426 is a binding site for GDP. The active-site Proton acceptor is the N426. The Cysteine radical intermediate role is filled by C428. GDP contacts are provided by residues E430 and T608–T611. The Proton acceptor role is filled by E430. Residues S793–E843 are disordered. Phosphoserine occurs at positions 806, 827, and 868. The segment covering S806–S820 has biased composition (low complexity).

This sequence belongs to the ribonucleoside diphosphate reductase large chain family. Heterotetramer of two large (R1) and two small (R2) subunits. S.cerevisiae has two different R1 subunits (RNR1 and RNR3) and two different R2 subunits (RNR2 and RNR4). The functional form of the small subunits is a RNR2-RNR4 heterodimer, where RNR2 provides the iron-radical center and RNR4 is required for proper folding of RNR2 and assembly with the large subunits. Under normal growth conditions, the active form of the large subunits is a homodimer of the constitutively expressed RNR1. In damaged cells or cells arrested for DNA synthesis, the reductase consists of multiple species because of the association of the small subunits (RNR2-RNR4) with either the RNR1 homodimer or a heterodimer of RNR1 and the damage-inducible RNR3.

It localises to the cytoplasm. The enzyme catalyses a 2'-deoxyribonucleoside 5'-diphosphate + [thioredoxin]-disulfide + H2O = a ribonucleoside 5'-diphosphate + [thioredoxin]-dithiol. Under complex allosteric control mediated by deoxynucleoside triphosphates and ATP binding to separate specificity and activation sites on the large subunit. The type of nucleotide bound at the specificity site determines substrate preference. It seems probable that ATP makes the enzyme reduce CDP and UDP, dGTP favors ADP reduction and dTTP favors GDP reduction. Stimulated by ATP and inhibited by dATP binding to the activity site. Functionally, provides the precursors necessary for DNA synthesis. Catalyzes the biosynthesis of deoxyribonucleotides from the corresponding ribonucleotides. This is Ribonucleoside-diphosphate reductase large chain 2 (RNR3) from Saccharomyces cerevisiae (strain ATCC 204508 / S288c) (Baker's yeast).